The following is a 447-amino-acid chain: Tubulin beta-4 chain (447 aa).

Positions 11, 69, 138, 142, 143, 144, 204, and 226 each coordinate GTP. Glu-69 contributes to the Mg(2+) binding site. Positions 423 to 447 (QQYQDATADEEGEYEDEEQQEADDM) are disordered. Residues 429-447 (TADEEGEYEDEEQQEADDM) are compositionally biased toward acidic residues.

This sequence belongs to the tubulin family. In terms of assembly, dimer of alpha and beta chains. A typical microtubule is a hollow water-filled tube with an outer diameter of 25 nm and an inner diameter of 15 nM. Alpha-beta heterodimers associate head-to-tail to form protofilaments running lengthwise along the microtubule wall with the beta-tubulin subunit facing the microtubule plus end conferring a structural polarity. Microtubules usually have 13 protofilaments but different protofilament numbers can be found in some organisms and specialized cells. It depends on Mg(2+) as a cofactor. Expressed in roots and leaf sheaths.

It is found in the cytoplasm. The protein resides in the cytoskeleton. Functionally, tubulin is the major constituent of microtubules, a cylinder consisting of laterally associated linear protofilaments composed of alpha- and beta-tubulin heterodimers. Microtubules grow by the addition of GTP-tubulin dimers to the microtubule end, where a stabilizing cap forms. Below the cap, tubulin dimers are in GDP-bound state, owing to GTPase activity of alpha-tubulin. This is Tubulin beta-4 chain (TUBB4) from Oryza sativa subsp. japonica (Rice).